A 185-amino-acid chain; its full sequence is Peptidyl-tRNA hydrolase (185 aa).

Y14 is a binding site for tRNA. The active-site Proton acceptor is the H19. TRNA is bound by residues Y64, N66, and N112.

This sequence belongs to the PTH family. In terms of assembly, monomer.

It is found in the cytoplasm. The catalysed reaction is an N-acyl-L-alpha-aminoacyl-tRNA + H2O = an N-acyl-L-amino acid + a tRNA + H(+). Its function is as follows. Hydrolyzes ribosome-free peptidyl-tRNAs (with 1 or more amino acids incorporated), which drop off the ribosome during protein synthesis, or as a result of ribosome stalling. In terms of biological role, catalyzes the release of premature peptidyl moieties from peptidyl-tRNA molecules trapped in stalled 50S ribosomal subunits, and thus maintains levels of free tRNAs and 50S ribosomes. In Lactobacillus delbrueckii subsp. bulgaricus (strain ATCC 11842 / DSM 20081 / BCRC 10696 / JCM 1002 / NBRC 13953 / NCIMB 11778 / NCTC 12712 / WDCM 00102 / Lb 14), this protein is Peptidyl-tRNA hydrolase.